The chain runs to 105 residues: MSDDLRVTTAHLRELSAKQGRAAAELATATAVVDGVDTALRFTHGPISWGTAAAVEAVQHARRAAGTGMVKVSQELETKLDTAAGRYHRTDSTMGDALDETIQPR.

This sequence belongs to the EspC family.

May be involved in assembly of the ESX-1 / type VII specialized secretion system (T7SS), which exports several proteins including EsxA and EsxB. Involved in DNA conjugation, in at least recipient strain. This is an uncharacterized protein from Mycolicibacterium smegmatis (strain MKD8) (Mycobacterium smegmatis).